Here is a 118-residue protein sequence, read N- to C-terminus: Putative pterin-4-alpha-carbinolamine dehydratase (118 aa).

The protein belongs to the pterin-4-alpha-carbinolamine dehydratase family.

The catalysed reaction is (4aS,6R)-4a-hydroxy-L-erythro-5,6,7,8-tetrahydrobiopterin = (6R)-L-erythro-6,7-dihydrobiopterin + H2O. The chain is Putative pterin-4-alpha-carbinolamine dehydratase from Azotobacter vinelandii (strain DJ / ATCC BAA-1303).